The chain runs to 626 residues: (+)-3-carene synthase 1, chloroplastic (626 aa).

Residues M1–A45 constitute a chloroplast transit peptide. Mg(2+)-binding residues include D377, D381, and D529. Residues D377 to D381 carry the DDXXD motif motif.

The protein belongs to the terpene synthase family. Tpsd subfamily. Mg(2+) serves as cofactor. It depends on Mn(2+) as a cofactor.

The protein localises to the plastid. It is found in the chloroplast. The enzyme catalyses (2E)-geranyl diphosphate = (+)-car-3-ene + diphosphate. It catalyses the reaction (2E)-geranyl diphosphate = terpinolene + diphosphate. The protein operates within terpene metabolism; oleoresin biosynthesis. It functions in the pathway secondary metabolite biosynthesis; terpenoid biosynthesis. Its function is as follows. Monoterpene synthase (TPS) involved in the biosynthesis of monoterpene natural products included in conifer oleoresin secretions and volatile emissions; these compounds contribute to biotic and abiotic stress defense against herbivores and pathogens. Catalyzes the conversion of (2E)-geranyl diphosphate (GPP) to (+)-car-3-ene and, to a lower extent, to terpinolene. This Pinus contorta (Shore pine) protein is (+)-3-carene synthase 1, chloroplastic.